The sequence spans 297 residues: Aspartate carbamoyltransferase catalytic subunit (297 aa).

Residues Arg49 and Thr50 each coordinate carbamoyl phosphate. Lys77 contacts L-aspartate. The carbamoyl phosphate site is built by Arg99, His129, and Gln132. Residues Arg162 and Arg215 each coordinate L-aspartate. Positions 256 and 257 each coordinate carbamoyl phosphate.

The protein belongs to the aspartate/ornithine carbamoyltransferase superfamily. ATCase family. Heterododecamer (2C3:3R2) of six catalytic PyrB chains organized as two trimers (C3), and six regulatory PyrI chains organized as three dimers (R2).

It catalyses the reaction carbamoyl phosphate + L-aspartate = N-carbamoyl-L-aspartate + phosphate + H(+). It functions in the pathway pyrimidine metabolism; UMP biosynthesis via de novo pathway; (S)-dihydroorotate from bicarbonate: step 2/3. Functionally, catalyzes the condensation of carbamoyl phosphate and aspartate to form carbamoyl aspartate and inorganic phosphate, the committed step in the de novo pyrimidine nucleotide biosynthesis pathway. The protein is Aspartate carbamoyltransferase catalytic subunit of Legionella pneumophila (strain Corby).